An 817-amino-acid chain; its full sequence is Verprolin (817 aa).

Positions M1–A15 are enriched in pro residues. Positions M1–V752 are disordered. A WH2 1 domain is found at G30–A47. Positions D37–D51 are enriched in basic and acidic residues. Residues V62 to M79 show a composition bias toward low complexity. The WH2 2 domain maps to M87–I106. An N-linked (GlcNAc...) asparagine glycan is attached at N109. Residues S119 to P180 are compositionally biased toward pro residues. Residue N212 is glycosylated (N-linked (GlcNAc...) asparagine). Pro residues predominate over residues P236–P245. Positions I254–S265 are enriched in polar residues. The segment covering S306–L335 has biased composition (pro residues). Residues P336–A348 show a composition bias toward low complexity. N337 carries N-linked (GlcNAc...) asparagine glycosylation. Residues P372 to P382 are compositionally biased toward pro residues. N383 carries N-linked (GlcNAc...) asparagine glycosylation. The span at N383–M395 shows a compositional bias: low complexity. Residues P396–G407 show a composition bias toward pro residues. The segment covering A408–L422 has biased composition (low complexity). A compositionally biased stretch (pro residues) spans A423–S432. Residues L447–A469 are compositionally biased toward low complexity. Residues D502–V516 show a composition bias toward basic and acidic residues. A compositionally biased stretch (low complexity) spans P518–N534. At S519 the chain carries Phosphoserine. Pro residues predominate over residues A557 to T579. A compositionally biased stretch (basic and acidic residues) spans G588 to E597. A compositionally biased stretch (pro residues) spans P649–P661. Residues M713 to L737 are compositionally biased toward polar residues. Residue S762 is modified to Phosphoserine. N-linked (GlcNAc...) asparagine glycosylation is found at N784 and N796. The disordered stretch occupies residues S786–G806.

The protein belongs to the verprolin family. In terms of processing, N-glycosylated.

Its subcellular location is the cytoplasm. It is found in the cytoskeleton. Functionally, involved in cytoskeletal organization and cellular growth. May exert its effects on the cytoskeleton directly, or indirectly via proline-binding proteins (e.g. profilin) or proteins possessing SH3 domains. The polypeptide is Verprolin (VRP1) (Saccharomyces cerevisiae (strain ATCC 204508 / S288c) (Baker's yeast)).